The chain runs to 312 residues: Putative ring-cleaving dioxygenase MhqO (312 aa).

VOC domains are found at residues Gly-7–Arg-131 and Gly-152–Asp-269. Positions 10, 217, and 265 each coordinate Fe cation.

It belongs to the extradiol ring-cleavage dioxygenase family. Requires Fe(2+) as cofactor.

It is found in the cytoplasm. Putative ring-cleavage dioxygenase that may contribute to the degradation of aromatic compounds. The protein is Putative ring-cleaving dioxygenase MhqO (mhqO) of Bacillus subtilis (strain 168).